A 371-amino-acid polypeptide reads, in one-letter code: MSSGNIWKQLLEENSEQLDQSTTETYVVCCENEDSLNQFLQQCWQIDEGEKVTNLEPLGFFTKVVSRDEENLRLNVYYAKSPLDAQTLQFLGVFLRQMETSQIRWIFLLDWLLDDKRLWLRQLRNSWAALEEAQVAPFPGGAVVVVLNPSHVTQLERNTMVWNSRRLDLVHQTLRAACLNTGSALVTLDPNTAREDVMHICALLAGLPTSRPVAMLSLQSLFIPHGADSIGKICTIAPEFPVATVFDNDFVSSTFEAAIAPELTPGPRVPSDHPWLTEPTNPPSEATAWHFDLQGRLATLYRHLGDSNKAISVTQHRFHKPRSEDYAYEFELPSKHPTIRDLIRSAAADSPNDVADSIDGLMDGIVQRNVH.

It belongs to the dynein light intermediate chain DYN3 family. The cytoplasmic dynein is composed of at least two heavy chains and a number of intermediate and light chains.

It localises to the cytoplasm. Its subcellular location is the cytoskeleton. In terms of biological role, component of the cytoplasmic dynein which acts as a motor for the intracellular retrograde motility of vesicles and organelles along microtubules. May play an important role in the proper orientation of the mitotic spindle into the budding daughter cell yeast. Probably required for normal progression of the cell cycle. This is Cytoplasmic dynein intermediate light chain DYN3 (DYN3) from Eremothecium gossypii (strain ATCC 10895 / CBS 109.51 / FGSC 9923 / NRRL Y-1056) (Yeast).